Here is a 172-residue protein sequence, read N- to C-terminus: R-phycocyanin-1 beta chain (172 aa).

Asparagine 72 is subject to N4-methylasparagine. Cysteine 82 is a binding site for (2R,3E)-phycocyanobilin. (2R,3E)-phycoerythrobilin is bound at residue cysteine 153.

The protein belongs to the phycobiliprotein family. Heterodimer of an alpha and a beta chain. Dimers further assemble into trimers and the trimers into hexamers. The basic functional unit of phycobiliproteins is a ring-shaped hexamer formed from two back-to-back trimers contacting via the alpha chain subunits. The trimers are composed of alpha/beta subunit heterodimers arranged around a three-fold axis of symmetry. The phycoerythrins also contain a gamma subunit which is located in the center of the hexamer. Contains two covalently linked bilin chromophores.

It localises to the plastid. The protein localises to the chloroplast thylakoid membrane. In terms of biological role, light-harvesting photosynthetic bile pigment-protein from the phycobiliprotein complex (phycobilisome, PBS). Phycocyanin is the major phycobiliprotein in the PBS rod. This Porphyridium purpureum (Red alga) protein is R-phycocyanin-1 beta chain (rpcB).